The following is a 417-amino-acid chain: MLLPVPLLLGLVGLAAAEPTIYFKEQFLDGDGWTDRWIESKHKPDFGRFVLSSGKFYGDQEKDKGLQTSQDARFYALSARFEPFSNKGQTLVVQFTVKHEQNIDCGGGYVKLFPDGLDQTDMHGDSEYNIMFGPDICGPGTKKVHVIFNYKGKNVLINKDIRCKDDEFTHLYTLIVRPDNTYEVKIDNSQVESGSLEDDWDFLPPKKIKDPDAVKPEDWDERAKIDDPTDSKPEDWDKPEHIPDPDAKKPEDWDEEMDGEWEPPVIQNPEYKGEWKPRQIDNPDYKGTWIHPEIDNPEYSPDSNIYAYENFAVLGLDLWQVKSGTIFDNFLITNDEAYAEEFGNETWGVTKAAEKQMKDKQDEEQRLKEEEEEKKRKEEEEVDKEDEEDKDEDEEEEDEKEEEEEEDAAAGQAKDEL.

The N-terminal stretch at 1-17 (MLLPVPLLLGLVGLAAA) is a signal peptide. The interval 18–197 (EPTIYFKEQF…NSQVESGSLE (180 aa)) is N-domain. Residues Gln26, Lys62, and Lys64 each coordinate Ca(2+). An N6-(2-hydroxyisobutyryl)lysine modification is found at Lys64. Residues Tyr109, Lys111, Tyr128, and Asp135 each coordinate an alpha-D-glucoside. Cys137 and Cys163 form a disulfide bridge. Lys159 bears the N6-acetyllysine mark. One copy of the 1-1 repeat lies at 191–202 (VESGSLEDDWDF). The interval 191–255 (VESGSLEDDW…DAKKPEDWDE (65 aa)) is 4 X approximate repeats. The interval 193–277 (SGSLEDDWDF…NPEYKGEWKP (85 aa)) is disordered. A P-domain region spans residues 198–308 (DDWDFLPPKK…YSPDSNIYAY (111 aa)). Over residues 207–251 (KIKDPDAVKPEDWDERAKIDDPTDSKPEDWDKPEHIPDPDAKKPE) the composition is skewed to basic and acidic residues. Lys209 carries the N6-acetyllysine modification. 6 repeat units span residues 210–221 (DPDAVKPEDWDE), 227–238 (DPTDSKPEDWDK), 244–255 (DPDAKKPEDWDE), 259–269 (GEWEPPVIQNP), 273–283 (GEWKPRQIDNP), and 287–297 (GTWIHPEIDNP). An interaction with PPIB region spans residues 237–270 (DKPEHIPDPDAKKPEDWDEEMDGEWEPPVIQNPE). The segment covering 252–261 (DWDEEMDGEW) has biased composition (acidic residues). A 3 X approximate repeats region spans residues 259–297 (GEWEPPVIQNPEYKGEWKPRQIDNPDYKGTWIHPEIDNP). The interval 309-417 (ENFAVLGLDL…AAAGQAKDEL (109 aa)) is C-domain. Residue Asp317 participates in an alpha-D-glucoside binding. Asp328 contacts Ca(2+). The interval 350 to 417 (TKAAEKQMKD…AAAGQAKDEL (68 aa)) is disordered. The segment covering 352–379 (AAEKQMKDKQDEEQRLKEEEEEKKRKEE) has biased composition (basic and acidic residues). The span at 380 to 408 (EEVDKEDEEDKDEDEEEEDEKEEEEEEDA) shows a compositional bias: acidic residues. The Prevents secretion from ER signature appears at 414–417 (KDEL).

The protein belongs to the calreticulin family. As to quaternary structure, monomer. Component of an EIF2 complex at least composed of CELF1/CUGBP1, CALR, CALR3, EIF2S1, EIF2S2, HSP90B1 and HSPA5. Interacts with PDIA3/ERp57 and SPACA9. Interacts with TRIM21. Interacts with NR3C1. Interacts with PPIB. Interacts (via P-domain) with PDIA5. Interacts with CLCC1. In blastocyst expressed in all blastomeres (at protein level). In embryos, expressed in spleen, kidney, liver, fat, muscle, ovary, granulosa cells and cumulus cells.

The protein resides in the endoplasmic reticulum lumen. It is found in the cytoplasm. The protein localises to the cytosol. It localises to the secreted. Its subcellular location is the extracellular space. The protein resides in the extracellular matrix. It is found in the cell surface. The protein localises to the sarcoplasmic reticulum lumen. It localises to the cytoplasmic vesicle. Its subcellular location is the secretory vesicle. The protein resides in the cortical granule. It is found in the cytolytic granule. In terms of biological role, calcium-binding chaperone that promotes folding, oligomeric assembly and quality control in the endoplasmic reticulum (ER) via the calreticulin/calnexin cycle. This lectin interacts transiently with almost all of the monoglucosylated glycoproteins that are synthesized in the ER. Interacts with the DNA-binding domain of NR3C1 and mediates its nuclear export. Involved in maternal gene expression regulation. May participate in oocyte maturation via the regulation of calcium homeostasis. Present in the cortical granules of non-activated oocytes, is exocytosed during the cortical reaction in response to oocyte activation and might participate in the block to polyspermy. The protein is Calreticulin (CALR) of Sus scrofa (Pig).